The chain runs to 795 residues: Serine/threonine-protein kinase MARK1 (795 aa).

Positions 1–41 (MSARTPLPTVNERDTENHTSVDGYTETHIPPAKSSSRQNLP) are disordered. T5 is modified (phosphothreonine). The region spanning 60–311 (YRLQKTIGKG…LEQIMKDRWM (252 aa)) is the Protein kinase domain. Residues 66-74 (IGKGNFAKV) and K89 contribute to the ATP site. The active-site Proton acceptor is the D182. T208 carries the post-translational modification Phosphothreonine. T215 carries the post-translational modification Phosphothreonine; by LKB1 and TAOK1. S219 is modified (phosphoserine; by GSK3-beta). One can recognise a UBA domain in the interval 329-370 (DLSDAKRIDIMVTMGFARDEINDALVSQKYDEVMATYILLGR). Disordered regions lie at residues 377-498 (GGES…SGGS) and 518-699 (QNGR…KPRS). Residues S382, S390, S393, S403, S423, and S444 each carry the phosphoserine modification. Residues 387 to 403 (CQRSRPSSDLNNSTLQS) show a composition bias toward polar residues. Residues 447–459 (SEQKEEWGKDTAR) show a composition bias toward basic and acidic residues. Residues 462-473 (GSTTVGSKSEVT) show a composition bias toward polar residues. The residue at position 475 (S475) is a Phosphoserine. Residues 486 to 495 (TASPSNNVYS) show a composition bias toward polar residues. Low complexity-rich tracts occupy residues 523-547 (SSLTEMSASSMSSAGSTVASAGPSA) and 585-599 (PAASPSAHSISASTP). Phosphoserine is present on S588. A Phosphothreonine; by PKC/PRKCZ modification is found at T613. A compositionally biased stretch (polar residues) spans 647-657 (GTSTGIISKIT). Basic and acidic residues-rich tracts occupy residues 661-676 (VRRDPSEGEASGRADT) and 683-697 (DPKERDKDEGKEAKP). S666 is subject to Phosphoserine. A KA1 domain is found at 746 to 795 (DARQDSLVQWEMEVCKLPRLSLNGVRFKRISGTSIAFKNIASKIANELKL).

The protein belongs to the protein kinase superfamily. CAMK Ser/Thr protein kinase family. SNF1 subfamily. As to quaternary structure, interacts with MAPT/TAU. Mg(2+) serves as cofactor. In terms of processing, phosphorylated at Thr-215 by STK11/LKB1 in complex with STE20-related adapter-alpha (STRADA) pseudo kinase and CAB39. Phosphorylation at Thr-215 by TAOK1 activates the kinase activity, leading to phosphorylation and detachment of MAPT/TAU from microtubules. Phosphorylation at Ser-219 by GSK3-beta (GSK3B) inhibits the kinase activity. Phosphorylation at Thr-613 by PRKCZ/aPKC in polarized epithelial cells inhibits the kinase activity.

It is found in the cell membrane. It localises to the cytoplasm. The protein localises to the cytoskeleton. The protein resides in the cell projection. Its subcellular location is the dendrite. The enzyme catalyses L-seryl-[protein] + ATP = O-phospho-L-seryl-[protein] + ADP + H(+). It carries out the reaction L-threonyl-[protein] + ATP = O-phospho-L-threonyl-[protein] + ADP + H(+). It catalyses the reaction L-seryl-[tau protein] + ATP = O-phospho-L-seryl-[tau protein] + ADP + H(+). The catalysed reaction is L-threonyl-[tau protein] + ATP = O-phospho-L-threonyl-[tau protein] + ADP + H(+). Its activity is regulated as follows. Inhibited by phosphorylation at Ser-219. Activated by phosphorylation on Thr-215. Its function is as follows. Serine/threonine-protein kinase. Involved in cell polarity and microtubule dynamics regulation. Phosphorylates DCX, MAP2 and MAP4. Phosphorylates the microtubule-associated protein MAPT/TAU. Involved in cell polarity by phosphorylating the microtubule-associated proteins MAP2, MAP4 and MAPT/TAU at KXGS motifs, causing detachment from microtubules, and their disassembly. Involved in the regulation of neuronal migration through its dual activities in regulating cellular polarity and microtubule dynamics, possibly by phosphorylating and regulating DCX. Also acts as a positive regulator of the Wnt signaling pathway, probably by mediating phosphorylation of dishevelled proteins (DVL1, DVL2 and/or DVL3). This Mus musculus (Mouse) protein is Serine/threonine-protein kinase MARK1.